Here is a 65-residue protein sequence, read N- to C-terminus: Conotoxin Cal16.1 (65 aa).

Positions 1–19 are cleaved as a signal peptide; the sequence is MRCLSIFVLLVLLVSFAVA. A propeptide spanning residues 20–48 is cleaved from the precursor; the sequence is ELDVEGEIVKQLLTRGTLKDADFWKRLEM. Gln-49 is modified (pyrrolidone carboxylic acid). 2 disulfides stabilise this stretch: Cys-51/Cys-60 and Cys-53/Cys-61. The residue at position 63 (Glu-63) is a Glutamic acid 1-amide.

Expressed by the venom duct.

The protein localises to the secreted. Functionally, probable neurotoxin with unknown target. Possibly targets ion channels. This Californiconus californicus (California cone) protein is Conotoxin Cal16.1.